Reading from the N-terminus, the 60-residue chain is Large ribosomal subunit protein uL30 (60 aa).

This sequence belongs to the universal ribosomal protein uL30 family. Part of the 50S ribosomal subunit.

The protein is Large ribosomal subunit protein uL30 of Leifsonia xyli subsp. xyli (strain CTCB07).